The sequence spans 165 residues: Nucleotide-binding protein Syncc9605_0652 (165 aa).

It belongs to the YajQ family.

Nucleotide-binding protein. In Synechococcus sp. (strain CC9605), this protein is Nucleotide-binding protein Syncc9605_0652.